The following is a 489-amino-acid chain: Kynureninase 2 (489 aa).

Polar residues predominate over residues 1–12 (MDASAAISQLRQ). The tract at residues 1 to 25 (MDASAAISQLRQGQKPEWPQNANTS) is disordered. Pyridoxal 5'-phosphate contacts are provided by residues Leu149, Thr150, 177-180 (FPSD), Asp261, His264, and Tyr286. N6-(pyridoxal phosphate)lysine is present on Lys287. Pyridoxal 5'-phosphate is bound by residues Trp317 and Asn345.

Belongs to the kynureninase family. In terms of assembly, homodimer. Requires pyridoxal 5'-phosphate as cofactor.

The protein resides in the cytoplasm. The catalysed reaction is L-kynurenine + H2O = anthranilate + L-alanine + H(+). The enzyme catalyses 3-hydroxy-L-kynurenine + H2O = 3-hydroxyanthranilate + L-alanine + H(+). It participates in amino-acid degradation; L-kynurenine degradation; L-alanine and anthranilate from L-kynurenine: step 1/1. It functions in the pathway cofactor biosynthesis; NAD(+) biosynthesis; quinolinate from L-kynurenine: step 2/3. In terms of biological role, catalyzes the cleavage of L-kynurenine (L-Kyn) and L-3-hydroxykynurenine (L-3OHKyn) into anthranilic acid (AA) and 3-hydroxyanthranilic acid (3-OHAA), respectively. The sequence is that of Kynureninase 2 from Phaeosphaeria nodorum (strain SN15 / ATCC MYA-4574 / FGSC 10173) (Glume blotch fungus).